Here is a 422-residue protein sequence, read N- to C-terminus: Gamma-glutamyl phosphate reductase (422 aa).

It belongs to the gamma-glutamyl phosphate reductase family.

It localises to the cytoplasm. The catalysed reaction is L-glutamate 5-semialdehyde + phosphate + NADP(+) = L-glutamyl 5-phosphate + NADPH + H(+). It participates in amino-acid biosynthesis; L-proline biosynthesis; L-glutamate 5-semialdehyde from L-glutamate: step 2/2. Catalyzes the NADPH-dependent reduction of L-glutamate 5-phosphate into L-glutamate 5-semialdehyde and phosphate. The product spontaneously undergoes cyclization to form 1-pyrroline-5-carboxylate. The chain is Gamma-glutamyl phosphate reductase from Chlorobium phaeovibrioides (strain DSM 265 / 1930) (Prosthecochloris vibrioformis (strain DSM 265)).